The sequence spans 335 residues: Putative hydrogenase expression/formation protein MJ0676 (335 aa).

Belongs to the HypE family.

In Methanocaldococcus jannaschii (strain ATCC 43067 / DSM 2661 / JAL-1 / JCM 10045 / NBRC 100440) (Methanococcus jannaschii), this protein is Putative hydrogenase expression/formation protein MJ0676.